A 489-amino-acid chain; its full sequence is Fumarate reductase (CoM/CoB) subunit B (489 aa).

The 2Fe-2S ferredoxin-type domain maps to Ile-2 to Pro-89. [2Fe-2S] cluster-binding residues include Cys-53, Cys-58, Cys-61, and Cys-73. 2 4Fe-4S ferredoxin-type domains span residues Pro-124 to Pro-158 and Ala-178 to Ala-209. [4Fe-4S] cluster-binding residues include Cys-136, Cys-139, Cys-142, Cys-146, Cys-189, Cys-192, Cys-195, and Cys-199.

In terms of assembly, subunit B of the heterodimeric fumarate reductase of methanogenic Archaea, composed of subunits A (TfrA) and B (TfrB). The cofactor is [2Fe-2S] cluster. [4Fe-4S] cluster is required as a cofactor.

Its subcellular location is the cytoplasm. The catalysed reaction is coenzyme B + coenzyme M + fumarate = coenzyme M-coenzyme B heterodisulfide + succinate. Functionally, catalyzes the reduction of fumarate with reduced coenzyme M (CoM-S-H) and coenzyme B (CoB-S-H). In vitro, is able to reduces fumarate with reduced benzyl viologen, oxidize CoM-S-H and CoB-S-H to CoM-S-S-CoB with methylene blue, and reduce CoM-S-S-CoB with reduced benzyl viologen. The enzyme has specificity for the two thiol compounds as the CoB--CoM heterodisulfide reductase. The enzyme is very sensitive to oxygen. The sequence is that of Fumarate reductase (CoM/CoB) subunit B from Methanothermobacter marburgensis (strain ATCC BAA-927 / DSM 2133 / JCM 14651 / NBRC 100331 / OCM 82 / Marburg) (Methanobacterium thermoautotrophicum).